Consider the following 845-residue polypeptide: Ribosome-releasing factor 2, mitochondrial (845 aa).

The N-terminal 28 residues, 1 to 28, are a transit peptide targeting the mitochondrion; sequence MIIATSLRSQTFCTWRAWRAVHSTAVRL. A tr-type G domain is found at 38 to 330; it reads DRTRNIGIIA…GVVKYLPSPL (293 aa). GTP contacts are provided by residues 47 to 54, 111 to 115, and 165 to 168; these read AHIDAGKT, DTPGH, and NKMD.

Belongs to the TRAFAC class translation factor GTPase superfamily. Classic translation factor GTPase family. EF-G/EF-2 subfamily.

Its subcellular location is the mitochondrion. Functionally, mitochondrial GTPase that mediates the disassembly of ribosomes from messenger RNA at the termination of mitochondrial protein biosynthesis. Not involved in the GTP-dependent ribosomal translocation step during translation elongation. The polypeptide is Ribosome-releasing factor 2, mitochondrial (Scheffersomyces stipitis (strain ATCC 58785 / CBS 6054 / NBRC 10063 / NRRL Y-11545) (Yeast)).